Here is a 111-residue protein sequence, read N- to C-terminus: Cell division protein FtsB (111 aa).

The Cytoplasmic portion of the chain corresponds to methionine 1–leucine 3. Residues leucine 4 to leucine 21 form a helical membrane-spanning segment. The Periplasmic portion of the chain corresponds to glycine 22–arginine 111. The stretch at aspartate 31 to threonine 62 forms a coiled coil. The interval valine 88–arginine 111 is disordered. The span at proline 90–glycine 100 shows a compositional bias: pro residues. A compositionally biased stretch (low complexity) spans alanine 101–arginine 111.

It belongs to the FtsB family. In terms of assembly, part of a complex composed of FtsB, FtsL and FtsQ.

It is found in the cell inner membrane. Essential cell division protein. May link together the upstream cell division proteins, which are predominantly cytoplasmic, with the downstream cell division proteins, which are predominantly periplasmic. This is Cell division protein FtsB from Bordetella petrii (strain ATCC BAA-461 / DSM 12804 / CCUG 43448).